We begin with the raw amino-acid sequence, 1055 residues long: Inactive exonuclease DIS3L2 (1055 aa).

2 disordered regions span residues 1 to 109 and 229 to 249; these read MKSA…SSPE and SAAK…KARQ. Residues 17–32 show a composition bias toward basic residues; that stretch reads HKKKRNRPQKQNRRSK. Residues 39–59 are compositionally biased toward basic and acidic residues; sequence EDAHVEESLDGRDSSRSKAKD. Low complexity predominate over residues 97–108; it reads PRRSASPLLSSP. A CSD2 domain is found at 367-446; that stretch reads YVQLMPADPR…PQINAILYQN (80 aa). An RNB domain is found at 476–824; that stretch reads RKDLRDLCVL…VHRALAAALE (349 aa). The Mg(2+) site is built by aspartate 488 and aspartate 497.

It belongs to the RNR ribonuclease family. DIS3L2 subfamily.

It is found in the cytoplasm. In terms of biological role, probable inactive 3'-5'-exoribonuclease. Is unable to complement the growth defect of a yeast mutant lacking RRP44 exonuclease. This Arabidopsis thaliana (Mouse-ear cress) protein is Inactive exonuclease DIS3L2.